Reading from the N-terminus, the 289-residue chain is Probable phosphoribulokinase (289 aa).

Residue 12 to 20 participates in ATP binding; sequence GSSGAGTTT.

Belongs to the phosphoribulokinase family.

It carries out the reaction D-ribulose 5-phosphate + ATP = D-ribulose 1,5-bisphosphate + ADP + H(+). In Escherichia coli (strain K12), this protein is Probable phosphoribulokinase (prkB).